The following is an 887-amino-acid chain: Oxysterol-binding protein-related protein 3 (887 aa).

The tract at residues 1–35 is disordered; it reads MMSDEKNLGVSQKLVSPSRSTSSCSSKQGSRQDSW. Phosphoserine is present on residues Ser16 and Ser34. Over residues 16–32 the composition is skewed to low complexity; the sequence is SPSRSTSSCSSKQGSRQ. The PH domain maps to 51–146; the sequence is PPVQKGFLLK…WVSKLRHHRM (96 aa). Residues 161–167 carry the FFAT 1 motif; it reads HFFSGST. 3 positions are modified to phosphoserine: Ser200, Ser251, and Ser265. Residues 261-326 form a disordered region; it reads GSFESPKKEK…KNYSDGSETS (66 aa). Basic residues predominate over residues 268–280; the sequence is KEKRSHRRWRSRA. Ser304, Ser309, Ser320, Ser323, Ser371, Ser372, Ser410, Ser425, Ser437, and Ser440 each carry phosphoserine. The short motif at 450–454 is the FFAT 2 element; sequence EFFDA.

Belongs to the OSBP family. Homodimer. Interacts with RRAS. Interacts (phosphorylated form) with VAPA. Interacts with OSBPL6. Phosphorylation is enhanced in vitro by phorbol-12-myristate-13-acetate (PMA), forskolin and calcium ionophore A23187. Phosphorylation seems to be stimulated in conditions of low cell-cell (or cell-matrix) adhesion. In terms of tissue distribution, expressed in a subset of small lymphocytes (at protein level). Expressed at high concentration in kidney, lymph node and thymus. Expressed at moderate concentration in stomach, jejunum, ileum, appendix, spleen, leukocytes, trachea, lung and thyroid gland. Expressed at low concentration in whole brain, esophagus, duodenum, ileocecum, colon, skeletal muscle, bone marrow, placenta and mammary gland. Isoform 1a, isoform 1b, isoform 1c and isoform 1d are highly expressed in brain, bone marrow, colon, kidney, lung, skeletal muscle, spleen, thymus and thyroid. Not expressed in heart and liver. Isoform 2a, isoform 2b, isoform 2c and isoform 2d are expressed in brain, bone marrow, kidney, skeletal muscle, spleen, thymus and thyroid. Not expressed in heart, liver and lung.

Its subcellular location is the endoplasmic reticulum membrane. It is found in the cytoplasm. The protein resides in the cytosol. It localises to the cell membrane. The protein localises to the cell projection. Its subcellular location is the filopodium tip. It is found in the nucleus membrane. In terms of biological role, phosphoinositide-binding protein which associates with both cell and endoplasmic reticulum (ER) membranes. Can bind to the ER membrane protein VAPA and recruit VAPA to plasma membrane sites, thus linking these intracellular compartments. The ORP3-VAPA complex stimulates RRAS signaling which in turn attenuates integrin beta-1 (ITGB1) activation at the cell surface. With VAPA, may regulate ER morphology. Has a role in regulation of the actin cytoskeleton, cell polarity and cell adhesion. Binds to phosphoinositides with preference for PI(3,4)P2 and PI(3,4,5)P3. Also binds 25-hydroxycholesterol and cholesterol. This chain is Oxysterol-binding protein-related protein 3 (OSBPL3), found in Homo sapiens (Human).